Consider the following 96-residue polypeptide: Evasin P1078 (96 aa).

An N-terminal signal peptide occupies residues Met1–Ala28. 3 disulfide bridges follow: Cys48–Cys67, Cys52–Cys69, and Cys63–Cys80. Asn51 carries N-linked (GlcNAc...) asparagine glycosylation. The N-linked (GlcNAc...) asparagine glycan is linked to Asn74.

It is found in the secreted. In terms of biological role, salivary chemokine-binding protein which binds to host chemokines CXCL1, CXCL2, CXCL3, CXCL5, CXCL6, CXCL11 and CXCL13. This Ixodes ricinus (Common tick) protein is Evasin P1078.